Reading from the N-terminus, the 207-residue chain is Serotype 2 fimbrial subunit (207 aa).

Positions 1–26 are cleaved as a signal peptide; that stretch reads MQIPFQRALRLCLRAALAAIASAAHA. The cysteines at positions 42 and 85 are disulfide-linked.

The protein belongs to the fimbrial protein family.

The protein localises to the fimbrium. Its function is as follows. Bordetella pertussis is the causative agent of whooping cough. An essential step in the disease process is the attachment of the bacteria to the ciliated epithelium of the respiratory tract, enabling the organism to resist normal host-clearance mechanisms. It is unclear which bacterial cell surface component are responsible for adherence but the fimbriae of B.pertussis are prime candidates for being involved in this process. This chain is Serotype 2 fimbrial subunit (fim2), found in Bordetella pertussis (strain Tohama I / ATCC BAA-589 / NCTC 13251).